Reading from the N-terminus, the 154-residue chain is uncharacterized protein (154 aa).

Its subcellular location is the mitochondrion. This is an uncharacterized protein from Arabidopsis thaliana (Mouse-ear cress).